A 448-amino-acid chain; its full sequence is N-succinylarginine dihydrolase (448 aa).

Substrate is bound by residues 19 to 28, asparagine 110, and 137 to 138; these read GGLSYGNVAS and HR. Residue glutamate 174 is part of the active site. Arginine 214 is a binding site for substrate. The active site involves histidine 250. Residues aspartate 252 and asparagine 365 each coordinate substrate. Residue cysteine 371 is the Nucleophile of the active site.

This sequence belongs to the succinylarginine dihydrolase family. Homodimer.

The enzyme catalyses N(2)-succinyl-L-arginine + 2 H2O + 2 H(+) = N(2)-succinyl-L-ornithine + 2 NH4(+) + CO2. The protein operates within amino-acid degradation; L-arginine degradation via AST pathway; L-glutamate and succinate from L-arginine: step 2/5. Functionally, catalyzes the hydrolysis of N(2)-succinylarginine into N(2)-succinylornithine, ammonia and CO(2). The chain is N-succinylarginine dihydrolase from Pseudomonas syringae pv. tomato (strain ATCC BAA-871 / DC3000).